Consider the following 1842-residue polypeptide: Fatty acid synthase alpha subunit pigJ (1842 aa).

A disordered region spans residues 120-184 (GAPVEEEGSK…TPAGGSTTPD (65 aa)). A compositionally biased stretch (low complexity) spans 140 to 175 (SGSSRTATTAKATVTTPSSSSPETAPPAASTPSQGT). The Carrier domain maps to 184–262 (DIPLSAKHVV…DALQGNFPGK (79 aa)). At Ser-222 the chain carries O-(pantetheine 4'-phosphoryl)serine. The interval 611–807 (GKTVLVTGAG…CGAAIGWVRG (197 aa)) is beta-ketoacyl reductase. A Ketosynthase family 3 (KS3) domain is found at 1058–1585 (KEFLQEIVVE…QKGGIAVVVA (528 aa)). Residues Cys-1244, His-1470, and His-1511 each act as for beta-ketoacyl synthase activity in the active site. Residues 1649–1672 (KARVGGHPENNNNNNNNSSSKRNT) are disordered. The span at 1658–1668 (NNNNNNNNSSS) shows a compositional bias: low complexity. Mg(2+) contacts are provided by Asp-1725, Val-1726, and Glu-1727. Residues 1725–1727 (DVE), Ser-1761, 1770–1780 (EAVFKSLQTPS), and 1823–1825 (ITH) contribute to the acetyl-CoA site. 2 residues coordinate Mg(2+): Thr-1824 and His-1825.

This sequence belongs to the thiolase-like superfamily. Fungal fatty acid synthetase subunit alpha family. As to quaternary structure, [Alpha(6)beta(6)] hexamers of two multifunctional subunits (alpha and beta).

It carries out the reaction acetyl-CoA + n malonyl-CoA + 2n NADPH + 4n H(+) = a long-chain-acyl-CoA + n CoA + n CO2 + 2n NADP(+).. The enzyme catalyses a fatty acyl-[ACP] + malonyl-[ACP] + H(+) = a 3-oxoacyl-[ACP] + holo-[ACP] + CO2. The catalysed reaction is a (3R)-hydroxyacyl-[ACP] + NADP(+) = a 3-oxoacyl-[ACP] + NADPH + H(+). It participates in secondary metabolite biosynthesis. Functionally, fatty acid synthase alpha subunit; part of the gene cluster that mediates the biosynthesis of azaphilone pigments (MonAzPs), a complex mixture of compounds with a common azaphilone skeleton very widely used as food colorants. PigJ and pigK form the two subunits of a dedicated fungal fatty acid synthase (FAS) that produces the side chain fatty acyl moiety of MonAzPs, a beta-keto fatty acid. The chain length control of the pigJ-pigK FAS is somewhat flexible as MonAzPs features either a beta-ketooctanoic or a beta-ketodecanoic acid moiety. The beta-ketoacyl-ACP probably serves as the substrate for the acetyltransferase pigD that directly transfers the fatty acyl chain to the C-4 alcohol of the pyran ring. The first step of the pathway is performed by the nrPKS pigA that forms the hexaketide precursor from successive condensations of five malonyl-CoA units, with a simple acetyl-CoA starter unit. The role of esterase pigG is not clear, but it may play at most a supplementary role in the formation of the benzaldehyde produced by the pigA nrPKS. This very reactive benzaldehyde is intercepted by the pigC ketoreductase that to provide the first stable enzyme-free MonAzPs intermediate, 6-(4-hydroxy-2-oxopentyl)-3-methyl-2,4-dioxocyclohexane carbaldehyde, also known as M7PKS-1. The FAD-dependent monooxygenase pigN hydroxylates M7PKS-1 at C-4, which triggers the formation of the pyran ring. PigJ, pigK and pigD are involved in the acetylation of the pyran ring. PigJ and pigK form the two subunits of a dedicated fungal FAS that produces the side chain fatty acyl moiety of MonAzPs and pigD transfers the fatty acyl chain to the C-4 alcohol. PigM and pigO are involved in the elimination of the omega-1 alcohol. PigM acts as an O-acetyltransferase that synthesizes the putative O-11 acetyl intermediate whereas pigO eliminates acetic acid to yield an intermediate with a C10(11) double bond. The dehydration of the C-11 alcohol followed by the reduction of the C6(7) double bond by the NAD(P)H-dependent oxidoreductase pigE increases the electrophilicity of the C-5 ketone of the resulting acyl benzopyran. This in turn sets up the C-5 ketone for an intramolecular Knoevenagel aldol condensation with the C-20 enol of the side chain. This condensation affords the characteristic linear tricyclic carbon skeletons of the yellow pigments that serve as the common precursors for the classical yellow pigments monascin and ankaflavin, orange pigments rubopunctatin and monascorubrin, and red pigments ribropunctamine and monascorubramine. The FAD-dependent oxidoreductase pigF is especially invoved in the biosynthesis of orange and red pigments via desaturation of C6(7). The polypeptide is Fatty acid synthase alpha subunit pigJ (Monascus ruber (Mold)).